The chain runs to 303 residues: Ribosomal large subunit pseudouridine synthase C (303 aa).

The S4 RNA-binding domain maps to 11-70; sequence SRLDKYLKRLYPLLTQGVIEKALRQKQITVNAQKAEASLRVKGGDKIFINDKFNLPVKQP. The active site involves Asp140.

This sequence belongs to the pseudouridine synthase RluA family.

It catalyses the reaction uridine(955/2504/2580) in 23S rRNA = pseudouridine(955/2504/2580) in 23S rRNA. Its function is as follows. Responsible for synthesis of pseudouridine from uracil at positions 955, 2504 and 2580 in 23S ribosomal RNA. This Rickettsia conorii (strain ATCC VR-613 / Malish 7) protein is Ribosomal large subunit pseudouridine synthase C (rluC).